Here is a 518-residue protein sequence, read N- to C-terminus: Xylose import ATP-binding protein XylG (518 aa).

ABC transporter domains are found at residues 6–245 (LQMN…VGRE) and 262–507 (FEAR…LSHP). 38–45 (GENGTGKS) contacts ATP.

Belongs to the ABC transporter superfamily. Xylose importer (TC 3.A.1.2.4) family. As to quaternary structure, the complex is composed of two ATP-binding proteins (XylG), two transmembrane proteins (XylH) and a solute-binding protein (XylF).

It is found in the cell inner membrane. The catalysed reaction is D-xylose(out) + ATP + H2O = D-xylose(in) + ADP + phosphate + H(+). Functionally, part of the ABC transporter complex XylFGH involved in xylose import. Responsible for energy coupling to the transport system. In Pseudomonas savastanoi pv. phaseolicola (strain 1448A / Race 6) (Pseudomonas syringae pv. phaseolicola (strain 1448A / Race 6)), this protein is Xylose import ATP-binding protein XylG.